Here is a 336-residue protein sequence, read N- to C-terminus: Succinylglutamate desuccinylase (336 aa).

Positions 59, 62, and 151 each coordinate Zn(2+). The active site involves glutamate 215.

It belongs to the AspA/AstE family. Succinylglutamate desuccinylase subfamily. Zn(2+) is required as a cofactor.

The enzyme catalyses N-succinyl-L-glutamate + H2O = L-glutamate + succinate. Its pathway is amino-acid degradation; L-arginine degradation via AST pathway; L-glutamate and succinate from L-arginine: step 5/5. Functionally, transforms N(2)-succinylglutamate into succinate and glutamate. The polypeptide is Succinylglutamate desuccinylase (Pseudomonas fluorescens (strain ATCC BAA-477 / NRRL B-23932 / Pf-5)).